We begin with the raw amino-acid sequence, 407 residues long: D-galactonate dehydratase family member Pjdr2_1176 (407 aa).

Residue Asp-208 participates in Mg(2+) binding. Position 210 (His-210) interacts with D-arabinonate. Positions 234 and 260 each coordinate Mg(2+). D-arabinonate-binding residues include Glu-260, Arg-281, and Glu-337.

The protein belongs to the mandelate racemase/muconate lactonizing enzyme family. GalD subfamily.

Functionally, has no detectable activity with D-mannonate and with a panel of 70 other acid sugars (in vitro), in spite of the conservation of the residues that are expected to be important for catalytic activity and cofactor binding. May have evolved a divergent function. The sequence is that of D-galactonate dehydratase family member Pjdr2_1176 from Paenibacillus sp. (strain JDR-2).